We begin with the raw amino-acid sequence, 204 residues long: MTTFLQRDDFAVTARVLGALFYYSPESHETAPLVQALLNDDWQAQWPLDAEALAPVAVMFKTHSEESLPQAWQRLFIGPYALPSPPWGSVWLDRESVLFGDSTLALRQWMRENGIQFEMQQNEPEDHFGSLLLLAAWLAENGRHHECEQLLAWHLFPWSSRFLDVFIDHAGHPFYQALGQLARLTLAQWQAQLIIPVAVKPLFR.

It belongs to the TorD/DmsD family. DmsD subfamily.

Functionally, required for biogenesis/assembly of DMSO reductase, but not for the interaction of the DmsA signal peptide with the Tat system. May be part of a chaperone cascade complex that facilitates a folding-maturation pathway for the substrate protein. The sequence is that of Tat proofreading chaperone DmsD from Salmonella paratyphi A (strain ATCC 9150 / SARB42).